A 129-amino-acid polypeptide reads, in one-letter code: Cytochrome c oxidase subunit 13, mitochondrial (129 aa).

The N-terminal 9 residues, 1 to 9, are a transit peptide targeting the mitochondrion; sequence MFRQCAKRY. At 10 to 43 the chain is on the mitochondrial matrix side; that stretch reads ASSLPPNALKPAFGPPDKVAAQKFKESLMATEKH. A helical transmembrane segment spans residues 44–71; the sequence is AKDTSNMWVKISVWVALPAIALTAVNTY. Residues 72 to 129 lie on the Mitochondrial intermembrane side of the membrane; the sequence is FVEKEHAEHREHLKHVPDSEWPRDYEFMNIRSKPFFWGDGDKTLFWNPVVNRHIEHDD.

Belongs to the cytochrome c oxidase subunit 6A family. As to quaternary structure, component of the cytochrome c oxidase (complex IV, CIV), a multisubunit enzyme composed of 12 subunits. The complex is composed of a catalytic core of 3 subunits COX1, COX2 and COX3, encoded in the mitochondrial DNA, and 9 supernumerary subunits COX4, COX5A (or COX5B), COX6, COX7, COX8, COX9, COX12, COX13 and COX26, which are encoded in the nuclear genome. The complex exists as a monomer or a dimer and forms supercomplexes (SCs) in the inner mitochondrial membrane with a dimer of ubiquinol-cytochrome c oxidoreductase (cytochrome b-c1 complex, complex III, CIII), resulting in 2 different assemblies (supercomplexes III(2)IV and III(2)IV(2)). COX13 interacts with COX1 and COX3 on the intermembrane space (IMS) and COX4 on the matrix side.

It is found in the mitochondrion inner membrane. It functions in the pathway energy metabolism; oxidative phosphorylation. Functionally, component of the cytochrome c oxidase, the last enzyme in the mitochondrial electron transport chain which drives oxidative phosphorylation. The respiratory chain contains 3 multisubunit complexes succinate dehydrogenase (complex II, CII), ubiquinol-cytochrome c oxidoreductase (cytochrome b-c1 complex, complex III, CIII) and cytochrome c oxidase (complex IV, CIV), that cooperate to transfer electrons derived from NADH and succinate to molecular oxygen, creating an electrochemical gradient over the inner membrane that drives transmembrane transport and the ATP synthase. Cytochrome c oxidase is the component of the respiratory chain that catalyzes the reduction of oxygen to water. Electrons originating from reduced cytochrome c in the intermembrane space (IMS) are transferred via the dinuclear copper A center (CU(A)) of COX2 and heme A of COX1 to the active site in COX1, a binuclear center (BNC) formed by heme A3 and copper B (CU(B)). The BNC reduces molecular oxygen to 2 water molecules using 4 electrons from cytochrome c in the IMS and 4 protons from the mitochondrial matrix. This is Cytochrome c oxidase subunit 13, mitochondrial (COX13) from Saccharomyces cerevisiae (strain ATCC 204508 / S288c) (Baker's yeast).